Here is a 118-residue protein sequence, read N- to C-terminus: NADH-quinone oxidoreductase subunit A (118 aa).

Transmembrane regions (helical) follow at residues 6–26 (LIIG…LLTA), 61–81 (FMYG…LPWA), and 87–107 (LGLF…IGLW).

It belongs to the complex I subunit 3 family. NDH-1 is composed of 14 different subunits. Subunits NuoA, H, J, K, L, M, N constitute the membrane sector of the complex.

Its subcellular location is the cell membrane. The enzyme catalyses a quinone + NADH + 5 H(+)(in) = a quinol + NAD(+) + 4 H(+)(out). NDH-1 shuttles electrons from NADH, via FMN and iron-sulfur (Fe-S) centers, to quinones in the respiratory chain. The immediate electron acceptor for the enzyme in this species is believed to be a menaquinone. Couples the redox reaction to proton translocation (for every two electrons transferred, four hydrogen ions are translocated across the cytoplasmic membrane), and thus conserves the redox energy in a proton gradient. This is NADH-quinone oxidoreductase subunit A from Clostridium beijerinckii (strain ATCC 51743 / NCIMB 8052) (Clostridium acetobutylicum).